The sequence spans 437 residues: Transmembrane protein with metallophosphoesterase domain (437 aa).

5 consecutive transmembrane segments (helical) span residues 7–27 (LSAE…MLIS), 41–61 (ALLF…LGSL), 87–107 (IIVL…FFLV), 116–136 (LLSF…FVFG), and 164–184 (VLAL…AAQP). Asp211, His213, Asp243, Asn274, His376, and His378 together coordinate a divalent metal cation.

It belongs to the metallophosphoesterase superfamily. LOC643853 family. It depends on a divalent metal cation as a cofactor.

The protein resides in the membrane. In Danio rerio (Zebrafish), this protein is Transmembrane protein with metallophosphoesterase domain (tmppe).